The primary structure comprises 92 residues: Regakine-1 (92 aa).

The first 21 residues, 1-21 (MRVSLAALAFLLTLAVLHSEA), serve as a signal peptide directing secretion. Intrachain disulfides connect Cys32–Cys56 and Cys33–Cys72.

Belongs to the intercrine beta (chemokine CC) family. As to expression, plasma serum.

The protein localises to the secreted. Functionally, chemotactic activity for neutrophils and lymphocytes. Binds to heparin. The sequence is that of Regakine-1 from Bos taurus (Bovine).